Reading from the N-terminus, the 393-residue chain is Erythronate-4-phosphate dehydrogenase (393 aa).

Substrate contacts are provided by serine 57 and threonine 79. NAD(+) is bound at residue aspartate 159. Residue arginine 229 is part of the active site. Aspartate 253 serves as a coordination point for NAD(+). Glutamate 258 is an active-site residue. The Proton donor role is filled by histidine 275. Glycine 278 contacts NAD(+). Tyrosine 279 serves as a coordination point for substrate.

This sequence belongs to the D-isomer specific 2-hydroxyacid dehydrogenase family. PdxB subfamily. In terms of assembly, homodimer.

The protein localises to the cytoplasm. It carries out the reaction 4-phospho-D-erythronate + NAD(+) = (R)-3-hydroxy-2-oxo-4-phosphooxybutanoate + NADH + H(+). It participates in cofactor biosynthesis; pyridoxine 5'-phosphate biosynthesis; pyridoxine 5'-phosphate from D-erythrose 4-phosphate: step 2/5. Its function is as follows. Catalyzes the oxidation of erythronate-4-phosphate to 3-hydroxy-2-oxo-4-phosphonooxybutanoate. The chain is Erythronate-4-phosphate dehydrogenase from Colwellia psychrerythraea (strain 34H / ATCC BAA-681) (Vibrio psychroerythus).